We begin with the raw amino-acid sequence, 275 residues long: Glutamate racemase (275 aa).

Residues 10–11 (DS) and 42–43 (YG) contribute to the substrate site. Cys-74 functions as the Proton donor/acceptor in the catalytic mechanism. 75-76 (NT) contributes to the substrate binding site. Residue Cys-189 is the Proton donor/acceptor of the active site. Position 190-191 (190-191 (TH)) interacts with substrate.

The protein belongs to the aspartate/glutamate racemases family.

The enzyme catalyses L-glutamate = D-glutamate. Its pathway is cell wall biogenesis; peptidoglycan biosynthesis. In terms of biological role, provides the (R)-glutamate required for cell wall biosynthesis. This chain is Glutamate racemase, found in Bartonella tribocorum (strain CIP 105476 / IBS 506).